A 315-amino-acid polypeptide reads, in one-letter code: Calumenin (315 aa).

An N-terminal signal peptide occupies residues 1–19; that stretch reads MDLRQFLMCLSLCTAFALS. Ser-44 is modified (phosphoserine). At Tyr-47 the chain carries Phosphotyrosine. The residue at position 65 (Thr-65) is a Phosphothreonine. EF-hand domains lie at 68–103, 104–139, 151–186, 188–223, 229–264, and 265–300; these read ESKE…AQKR, WIYE…YVLD, QMMV…EEYD, MKDI…HDGN, WVKT…SDYD, and HAEA…FVGS. Ser-69 carries the post-translational modification Phosphoserine. Ca(2+)-binding residues include Asp-81, Asp-83, Asp-85, Glu-92, Asp-117, Asn-119, Asp-121, and Glu-128. Asn-131 carries N-linked (GlcNAc...) asparagine glycosylation. Position 164 (Asp-164) interacts with Ca(2+). At Lys-165 the chain carries N6-acetyllysine. Residues Asp-166, Asp-168, Glu-175, Asp-201, Asn-203, Asp-205, Glu-212, Asp-242, Asn-244, Asp-246, Lys-248, and Glu-253 each contribute to the Ca(2+) site. Residue Thr-254 is modified to Phosphothreonine. Phosphoserine is present on residues Ser-261 and Ser-277. Residues Asp-278, Asn-280, Asp-282, Lys-284, and Glu-289 each coordinate Ca(2+). A Prevents secretion from ER motif is present at residues 312–315; sequence HDEF.

The protein belongs to the CREC family. As to quaternary structure, interacts with GGCX.

Its subcellular location is the endoplasmic reticulum membrane. The protein localises to the golgi apparatus. It is found in the secreted. It localises to the melanosome. The protein resides in the sarcoplasmic reticulum lumen. Functionally, involved in regulation of vitamin K-dependent carboxylation of multiple N-terminal glutamate residues. Seems to inhibit gamma-carboxylase GGCX. Binds 7 calcium ions with a low affinity. This chain is Calumenin (CALU), found in Pongo abelii (Sumatran orangutan).